A 494-amino-acid chain; its full sequence is Glutamate--tRNA ligase (494 aa).

A 'HIGH' region motif is present at residues 9–19 (PSPTGDPHVGT). The 'KMSKS' region signature appears at 250–254 (KLSKR). Residue Lys-253 coordinates ATP.

It belongs to the class-I aminoacyl-tRNA synthetase family. Glutamate--tRNA ligase type 1 subfamily. In terms of assembly, monomer.

Its subcellular location is the cytoplasm. The enzyme catalyses tRNA(Glu) + L-glutamate + ATP = L-glutamyl-tRNA(Glu) + AMP + diphosphate. In terms of biological role, catalyzes the attachment of glutamate to tRNA(Glu) in a two-step reaction: glutamate is first activated by ATP to form Glu-AMP and then transferred to the acceptor end of tRNA(Glu). This chain is Glutamate--tRNA ligase, found in Alcanivorax borkumensis (strain ATCC 700651 / DSM 11573 / NCIMB 13689 / SK2).